A 210-amino-acid polypeptide reads, in one-letter code: Leucyl/phenylalanyl-tRNA--protein transferase (210 aa).

Belongs to the L/F-transferase family.

It localises to the cytoplasm. It carries out the reaction N-terminal L-lysyl-[protein] + L-leucyl-tRNA(Leu) = N-terminal L-leucyl-L-lysyl-[protein] + tRNA(Leu) + H(+). The enzyme catalyses N-terminal L-arginyl-[protein] + L-leucyl-tRNA(Leu) = N-terminal L-leucyl-L-arginyl-[protein] + tRNA(Leu) + H(+). It catalyses the reaction L-phenylalanyl-tRNA(Phe) + an N-terminal L-alpha-aminoacyl-[protein] = an N-terminal L-phenylalanyl-L-alpha-aminoacyl-[protein] + tRNA(Phe). Its function is as follows. Functions in the N-end rule pathway of protein degradation where it conjugates Leu, Phe and, less efficiently, Met from aminoacyl-tRNAs to the N-termini of proteins containing an N-terminal arginine or lysine. This chain is Leucyl/phenylalanyl-tRNA--protein transferase, found in Deinococcus radiodurans (strain ATCC 13939 / DSM 20539 / JCM 16871 / CCUG 27074 / LMG 4051 / NBRC 15346 / NCIMB 9279 / VKM B-1422 / R1).